Reading from the N-terminus, the 179-residue chain is Large ribosomal subunit protein uL5 (179 aa).

This sequence belongs to the universal ribosomal protein uL5 family. Part of the 50S ribosomal subunit; part of the 5S rRNA/L5/L18/L25 subcomplex. Contacts the 5S rRNA and the P site tRNA. Forms a bridge to the 30S subunit in the 70S ribosome.

Its function is as follows. This is one of the proteins that bind and probably mediate the attachment of the 5S RNA into the large ribosomal subunit, where it forms part of the central protuberance. In the 70S ribosome it contacts protein S13 of the 30S subunit (bridge B1b), connecting the 2 subunits; this bridge is implicated in subunit movement. Contacts the P site tRNA; the 5S rRNA and some of its associated proteins might help stabilize positioning of ribosome-bound tRNAs. The polypeptide is Large ribosomal subunit protein uL5 (Chromohalobacter salexigens (strain ATCC BAA-138 / DSM 3043 / CIP 106854 / NCIMB 13768 / 1H11)).